Here is a 495-residue protein sequence, read N- to C-terminus: Ectonucleoside triphosphate diphosphohydrolase 8 (495 aa).

Residues 1–8 (MGLTWKQR) lie on the Cytoplasmic side of the membrane. Residues 9 to 29 (VFTALLGAAAVSGLTALLLVL) traverse the membrane as a helical segment. Residues 30 to 466 (VGTMNVLLPP…PAQGWAQSFG (437 aa)) are Extracellular-facing. A disulfide bond links Cys78 and Cys102. Glu168 functions as the Proton acceptor in the catalytic mechanism. A disulfide bridge connects residues Cys246 and Cys292. N-linked (GlcNAc...) asparagine glycans are attached at residues Asn303 and Asn324. Intrachain disulfides connect Cys328/Cys334 and Cys380/Cys403. The chain crosses the membrane as a helical span at residues 467 to 487 (VWAAGVVFVVLTLAATLGAVA). At 488-495 (VQVFWLQD) the chain is on the cytoplasmic side.

Belongs to the GDA1/CD39 NTPase family. It depends on Ca(2+) as a cofactor. The cofactor is Mg(2+). Post-translationally, N-glycosylated.

The protein localises to the cell membrane. It catalyses the reaction a ribonucleoside 5'-triphosphate + 2 H2O = a ribonucleoside 5'-phosphate + 2 phosphate + 2 H(+). Its function is as follows. Canalicular ectonucleoside NTPDase responsible for the main hepatic NTPDase activity. Ectonucleoside NTPDases catalyze the hydrolysis of gamma- and beta-phosphate residues of nucleotides, playing a central role in concentration of extracellular nucleotides. Has activity toward ATP, ADP, UTP and UDP, but not toward AMP. This chain is Ectonucleoside triphosphate diphosphohydrolase 8 (ENTPD8), found in Bos taurus (Bovine).